We begin with the raw amino-acid sequence, 85 residues long: MAKEELIEMQGSVTEVLPDSRFRVTLDNGHQLIAYTGGKMRKHHIRILAGDKVSLEMSPYDLTKGRITFRHLPGRGPGPSSSGSR.

Positions 1–72 constitute an S1-like domain; the sequence is MAKEELIEMQ…TKGRITFRHL (72 aa).

The protein belongs to the IF-1 family. Component of the 30S ribosomal translation pre-initiation complex which assembles on the 30S ribosome in the order IF-2 and IF-3, IF-1 and N-formylmethionyl-tRNA(fMet); mRNA recruitment can occur at any time during PIC assembly.

The protein localises to the cytoplasm. Functionally, one of the essential components for the initiation of protein synthesis. Stabilizes the binding of IF-2 and IF-3 on the 30S subunit to which N-formylmethionyl-tRNA(fMet) subsequently binds. Helps modulate mRNA selection, yielding the 30S pre-initiation complex (PIC). Upon addition of the 50S ribosomal subunit IF-1, IF-2 and IF-3 are released leaving the mature 70S translation initiation complex. This Paracidovorax citrulli (strain AAC00-1) (Acidovorax citrulli) protein is Translation initiation factor IF-1 2.